A 396-amino-acid polypeptide reads, in one-letter code: Interleukin enhancer-binding factor 2 homolog (396 aa).

One can recognise a DZF domain in the interval 22 to 379; that stretch reads KTFVPRHPFD…KKEGDLEEDI (358 aa). Residues 367 to 396 form a disordered region; that stretch reads PTDKKEGDLEEDIDMIENENEEEGSDDGAE. Residues 374–396 show a composition bias toward acidic residues; it reads DLEEDIDMIENENEEEGSDDGAE.

The protein localises to the nucleus. May regulate transcription of undefined genes. This chain is Interleukin enhancer-binding factor 2 homolog, found in Drosophila melanogaster (Fruit fly).